Here is a 607-residue protein sequence, read N- to C-terminus: Elongation factor 4 (607 aa).

Residues 11 to 193 (ENIRNFSIIA…KIVEVVPPPE (183 aa)) form the tr-type G domain. Residues 23 to 28 (DHGKST) and 140 to 143 (NKID) contribute to the GTP site.

The protein belongs to the TRAFAC class translation factor GTPase superfamily. Classic translation factor GTPase family. LepA subfamily.

Its subcellular location is the cell membrane. The enzyme catalyses GTP + H2O = GDP + phosphate + H(+). Functionally, required for accurate and efficient protein synthesis under certain stress conditions. May act as a fidelity factor of the translation reaction, by catalyzing a one-codon backward translocation of tRNAs on improperly translocated ribosomes. Back-translocation proceeds from a post-translocation (POST) complex to a pre-translocation (PRE) complex, thus giving elongation factor G a second chance to translocate the tRNAs correctly. Binds to ribosomes in a GTP-dependent manner. The sequence is that of Elongation factor 4 from Staphylococcus haemolyticus (strain JCSC1435).